Consider the following 179-residue polypeptide: uncharacterized protein (179 aa).

The next 4 membrane-spanning stretches (helical) occupy residues 9–31, 41–63, 114–136, and 146–168; these read WILV…VSTL, AFLL…YGSF, AYYG…LLGA, and AFWG…NYLM.

The protein localises to the cell membrane. This is an uncharacterized protein from Aquifex aeolicus (strain VF5).